The primary structure comprises 246 residues: 4-hydroxy-tetrahydrodipicolinate reductase (246 aa).

7–12 (GCSGRM) contacts NAD(+). Arg34 provides a ligand contact to NADP(+). NAD(+) is bound by residues 76–78 (ATT) and 102–105 (CPNT). The active-site Proton donor/acceptor is His135. Residue His136 participates in (S)-2,3,4,5-tetrahydrodipicolinate binding. Lys139 acts as the Proton donor in catalysis. Residue 145 to 146 (GT) participates in (S)-2,3,4,5-tetrahydrodipicolinate binding.

It belongs to the DapB family.

It is found in the cytoplasm. It carries out the reaction (S)-2,3,4,5-tetrahydrodipicolinate + NAD(+) + H2O = (2S,4S)-4-hydroxy-2,3,4,5-tetrahydrodipicolinate + NADH + H(+). It catalyses the reaction (S)-2,3,4,5-tetrahydrodipicolinate + NADP(+) + H2O = (2S,4S)-4-hydroxy-2,3,4,5-tetrahydrodipicolinate + NADPH + H(+). The protein operates within amino-acid biosynthesis; L-lysine biosynthesis via DAP pathway; (S)-tetrahydrodipicolinate from L-aspartate: step 4/4. Functionally, catalyzes the conversion of 4-hydroxy-tetrahydrodipicolinate (HTPA) to tetrahydrodipicolinate. This chain is 4-hydroxy-tetrahydrodipicolinate reductase, found in Chlamydia abortus (strain DSM 27085 / S26/3) (Chlamydophila abortus).